The chain runs to 301 residues: Glycosyltransferase GlyG (301 aa).

The protein belongs to the glycosyltransferase 2 family.

The protein operates within protein modification; protein glycosylation. In terms of biological role, involved in the polymorphic O-glycosylation of the serine-rich repeat protein PsrP. Catalyzes the third step in glycosylation PsrP in this bacteria. Transfers glucose from UDP-glucose to the terminal glucose moiety of already-glycosylated PsrP (using truncated substrates with PsrP SSR1-GlcNAc-Glc). Has a marked preference for PsrP substrate that has already been modified by GlcNAc and glucose. In vitro has hydrolytic activity against UDP-glucose and to a lesser extent against UDP-galactose. Also catalyzes the fourth step in glycosylation of the serine-rich repeat protein PsrP in this bacteria. Can transfer the sugar from UDP-glucose (and much less well from UDP-galactose) to the terminal sugar moiety of PsrP-GlcNAc-Glc-Gal or of PsrP-GlcNAc-Glc-Glc. In Streptococcus pneumoniae serotype 4 (strain ATCC BAA-334 / TIGR4), this protein is Glycosyltransferase GlyG.